The sequence spans 370 residues: Holliday junction branch migration complex subunit RuvB (370 aa).

The disordered stretch occupies residues 1-53; sequence MAILSSQKQPLEPEPSKNPQSVQQPGLPPSTPEQGLLTAEVSPEERLSRTDDI. A large ATPase domain (RuvB-L) region spans residues 13-214; the sequence is PEPSKNPQSV…FGLIQRLRFY (202 aa). Basic and acidic residues predominate over residues 43–53; the sequence is PEERLSRTDDI. ATP-binding positions include Ile53, Arg54, Gly95, Lys98, Thr99, Thr100, 161–163, Arg204, Tyr214, and Arg251; that span reads EDF. Thr99 serves as a coordination point for Mg(2+). Residues 215 to 285 form a small ATPAse domain (RuvB-S) region; it reads EPEELSQIIL…IASEALQLFN (71 aa). A head domain (RuvB-H) region spans residues 288 to 370; the sequence is PCGLDWTDRR…TPPDGQLSLL (83 aa). Arg343 and Arg348 together coordinate DNA.

It belongs to the RuvB family. Homohexamer. Forms an RuvA(8)-RuvB(12)-Holliday junction (HJ) complex. HJ DNA is sandwiched between 2 RuvA tetramers; dsDNA enters through RuvA and exits via RuvB. An RuvB hexamer assembles on each DNA strand where it exits the tetramer. Each RuvB hexamer is contacted by two RuvA subunits (via domain III) on 2 adjacent RuvB subunits; this complex drives branch migration. In the full resolvosome a probable DNA-RuvA(4)-RuvB(12)-RuvC(2) complex forms which resolves the HJ.

The protein resides in the cytoplasm. It catalyses the reaction ATP + H2O = ADP + phosphate + H(+). The RuvA-RuvB-RuvC complex processes Holliday junction (HJ) DNA during genetic recombination and DNA repair, while the RuvA-RuvB complex plays an important role in the rescue of blocked DNA replication forks via replication fork reversal (RFR). RuvA specifically binds to HJ cruciform DNA, conferring on it an open structure. The RuvB hexamer acts as an ATP-dependent pump, pulling dsDNA into and through the RuvAB complex. RuvB forms 2 homohexamers on either side of HJ DNA bound by 1 or 2 RuvA tetramers; 4 subunits per hexamer contact DNA at a time. Coordinated motions by a converter formed by DNA-disengaged RuvB subunits stimulates ATP hydrolysis and nucleotide exchange. Immobilization of the converter enables RuvB to convert the ATP-contained energy into a lever motion, pulling 2 nucleotides of DNA out of the RuvA tetramer per ATP hydrolyzed, thus driving DNA branch migration. The RuvB motors rotate together with the DNA substrate, which together with the progressing nucleotide cycle form the mechanistic basis for DNA recombination by continuous HJ branch migration. Branch migration allows RuvC to scan DNA until it finds its consensus sequence, where it cleaves and resolves cruciform DNA. The protein is Holliday junction branch migration complex subunit RuvB of Cyanothece sp. (strain PCC 7425 / ATCC 29141).